The following is a 245-amino-acid chain: Protein crossbronx (245 aa).

Residues 20-177 enclose the UBC core domain; sequence HQEYKILAEY…VQESIAESKA (158 aa).

The protein belongs to the ubiquitin-conjugating enzyme family. FTS subfamily.

The chain is Protein crossbronx (cbx) from Drosophila mojavensis (Fruit fly).